The chain runs to 442 residues: 3-phosphoshikimate 1-carboxyvinyltransferase (442 aa).

3-phosphoshikimate-binding residues include Lys-23, Ser-24, and Arg-28. Lys-23 provides a ligand contact to phosphoenolpyruvate. Positions 95 and 123 each coordinate phosphoenolpyruvate. 3-phosphoshikimate-binding residues include Ser-167, Gln-169, Asp-315, and Lys-342. Gln-169 is a phosphoenolpyruvate binding site. Asp-315 acts as the Proton acceptor in catalysis. Positions 346 and 390 each coordinate phosphoenolpyruvate.

This sequence belongs to the EPSP synthase family. In terms of assembly, monomer.

It is found in the cytoplasm. It catalyses the reaction 3-phosphoshikimate + phosphoenolpyruvate = 5-O-(1-carboxyvinyl)-3-phosphoshikimate + phosphate. The protein operates within metabolic intermediate biosynthesis; chorismate biosynthesis; chorismate from D-erythrose 4-phosphate and phosphoenolpyruvate: step 6/7. Its function is as follows. Catalyzes the transfer of the enolpyruvyl moiety of phosphoenolpyruvate (PEP) to the 5-hydroxyl of shikimate-3-phosphate (S3P) to produce enolpyruvyl shikimate-3-phosphate and inorganic phosphate. The protein is 3-phosphoshikimate 1-carboxyvinyltransferase of Dichelobacter nodosus (strain VCS1703A).